The following is a 173-amino-acid chain: uncharacterized protein (173 aa).

An N-terminal signal peptide occupies residues 1-25 (MPVVTAVGRRRGFAMPWVSTARSGA).

This is an uncharacterized protein from Mycobacterium bovis (strain ATCC BAA-935 / AF2122/97).